Reading from the N-terminus, the 417-residue chain is Fructose-1,6-bisphosphatase 1, chloroplastic (417 aa).

The N-terminal 59 residues, 1–59 (MAATAATTTSSHLLLSSSRHVASSSQPSILSPRSLFSNNGKRAPTGVRNHQYASGVRCM), are a transit peptide targeting the chloroplast. The span at 24–35 (SSQPSILSPRSL) shows a compositional bias: low complexity. The segment at 24 to 48 (SSQPSILSPRSLFSNNGKRAPTGVR) is disordered. The residue at position 60 (alanine 60) is an N-acetylalanine. Glutamate 138, glutamate 167, aspartate 188, leucine 190, and aspartate 191 together coordinate Mg(2+). 191 to 194 (DGSS) is a binding site for substrate. The cysteines at positions 233 and 238 are disulfide-linked. Substrate-binding residues include asparagine 297, tyrosine 329, tyrosine 347, tyrosine 349, and lysine 359. Glutamate 365 provides a ligand contact to Mg(2+).

It belongs to the FBPase class 1 family. Homotetramer. It depends on Mg(2+) as a cofactor.

The protein resides in the plastid. The protein localises to the chloroplast stroma. The catalysed reaction is beta-D-fructose 1,6-bisphosphate + H2O = beta-D-fructose 6-phosphate + phosphate. It participates in carbohydrate biosynthesis; Calvin cycle. In terms of biological role, catalyzes the irreversible reaction from fructose-1,6-bisphosphate to fructose-6-phosphate and inorganic phosphate, to regenerate the primary CO(2) acceptor molecule, ribulose-1,5-bisphosphate. Involved in the regulation of photosynthetic electron flow and sucrose synthesis. Its activity is critical for normal plant development and important for the regulation of a wide range of metabolic processes. This chain is Fructose-1,6-bisphosphatase 1, chloroplastic, found in Arabidopsis thaliana (Mouse-ear cress).